Reading from the N-terminus, the 136-residue chain is uncharacterized protein (136 aa).

The next 2 membrane-spanning stretches (helical) occupy residues Ile25 to Phe47 and Ile78 to Ala97.

Its subcellular location is the cell membrane. This is an uncharacterized protein from Bacillus subtilis (strain 168).